The following is a 242-amino-acid chain: tRNA pseudouridine synthase A (242 aa).

The Nucleophile role is filled by Asp-51. Tyr-107 is a substrate binding site.

Belongs to the tRNA pseudouridine synthase TruA family. Homodimer.

The enzyme catalyses uridine(38/39/40) in tRNA = pseudouridine(38/39/40) in tRNA. Its function is as follows. Formation of pseudouridine at positions 38, 39 and 40 in the anticodon stem and loop of transfer RNAs. This Helicobacter pylori (strain P12) protein is tRNA pseudouridine synthase A.